Here is a 376-residue protein sequence, read N- to C-terminus: MNSLQVLTKKVLIENKAFSNYHEDDSFILQQLGLWWENGPIGFCKQCKMVISGSMSCSDVDSYELDRALVKAVKENQTDLIKLFVLWNADINYGIMCAKTERTKVLCIQLGANPEFLDNKKLYNMFVNLVRQQKVLLAIDIYYDNILILDSFGSHDFHALINFIYNGYILNLDEKEKMTRNTLVLKFWYKLAIEFNLIKPIRFLSKKFPHLDDWRLKTAVYLGNVDEIHHAYFQENIRLEPNHMMSLACMYPQNKLGIYYCFALGANINTALETLIRFINHEVYREITFFSNYGIWSNIHFCISLGANPDTKKIQETLLREEKNVIMKLLFKKGFLGPHSILHKKILEPSEVRKIISTYEYTETFHSFSSLRDNLR.

The protein belongs to the asfivirus MGF 360 family.

Its function is as follows. Plays a role in virus cell tropism, and may be required for efficient virus replication in macrophages. The chain is Protein MGF 360-7L from Ornithodoros (relapsing fever ticks).